A 355-amino-acid polypeptide reads, in one-letter code: Protein MGF 360-3L (355 aa).

One copy of the ANK repeat lies at 60–92; the sequence is KLNTALVLAVKENNYDLIVLFTEWGANINYALL.

This sequence belongs to the asfivirus MGF 360 family.

Its function is as follows. Plays a role in virus cell tropism, and may be required for efficient virus replication in macrophages. The sequence is that of Protein MGF 360-3L from Ornithodoros (relapsing fever ticks).